A 460-amino-acid chain; its full sequence is Cysteine--tRNA ligase (460 aa).

Cys-28 contributes to the Zn(2+) binding site. Positions 30–40 match the 'HIGH' region motif; sequence MTVYDYCHLGH. Zn(2+) contacts are provided by Cys-209, His-234, and Glu-238. Positions 266-270 match the 'KMSKS' region motif; the sequence is KMSKS. Residue Lys-269 coordinates ATP.

It belongs to the class-I aminoacyl-tRNA synthetase family. Monomer. It depends on Zn(2+) as a cofactor.

The protein resides in the cytoplasm. It catalyses the reaction tRNA(Cys) + L-cysteine + ATP = L-cysteinyl-tRNA(Cys) + AMP + diphosphate. This chain is Cysteine--tRNA ligase, found in Pseudomonas putida (strain ATCC 47054 / DSM 6125 / CFBP 8728 / NCIMB 11950 / KT2440).